A 259-amino-acid polypeptide reads, in one-letter code: UPF0758 protein Bphyt_3148 (259 aa).

Positions 137–259 constitute an MPN domain; the sequence is LLNSPEAVEN…VYSFARAGWP (123 aa). Residues histidine 208, histidine 210, and aspartate 221 each contribute to the Zn(2+) site. A JAMM motif motif is present at residues 208 to 221; the sequence is HNHPSGAVQPSASD.

This sequence belongs to the UPF0758 family.

The protein is UPF0758 protein Bphyt_3148 of Paraburkholderia phytofirmans (strain DSM 17436 / LMG 22146 / PsJN) (Burkholderia phytofirmans).